The sequence spans 272 residues: Putative esterase/lipase 3 (272 aa).

The active site involves His34. Residue Ser100 is the Charge relay system of the active site.

It belongs to the lipase/esterase LIP3/BchO family.

The polypeptide is Putative esterase/lipase 3 (Mycoplasma pneumoniae (strain ATCC 29342 / M129 / Subtype 1) (Mycoplasmoides pneumoniae)).